The following is a 2355-amino-acid chain: Acetyl-CoA carboxylase 2 (2355 aa).

In terms of domain architecture, Biotin carboxylation spans Pro-138–Ala-645. The region spanning Gly-291–Ile-485 is the ATP-grasp domain. Cys-317 to Leu-374 contacts ATP. Mg(2+) contacts are provided by Glu-440, Glu-454, and Asn-456. Mn(2+)-binding residues include Glu-440, Glu-454, and Asn-456. Residue Arg-458 is part of the active site. One can recognise a Biotinyl-binding domain in the interval Leu-772 to Asp-846. An N6-biotinyllysine modification is found at Lys-813. A Phosphothreonine modification is found at Thr-1133. Ser-1293 is subject to Phosphoserine. Residues Gln-1593–Ala-1932 enclose the CoA carboxyltransferase N-terminal domain. Residues Gln-1593 to Lys-2251 are carboxyltransferase. The CoA site is built by Arg-1841, Lys-2142, and Arg-2144. Residues Pro-1936–Lys-2251 form the CoA carboxyltransferase C-terminal domain.

Homodimer. Biotin serves as cofactor. The cofactor is Mg(2+). Mn(2+) is required as a cofactor. In terms of tissue distribution, widely expressed at low levels.

The protein resides in the cytoplasm. It localises to the cytosol. It catalyses the reaction hydrogencarbonate + acetyl-CoA + ATP = malonyl-CoA + ADP + phosphate + H(+). It carries out the reaction N(6)-biotinyl-L-lysyl-[protein] + hydrogencarbonate + ATP = N(6)-carboxybiotinyl-L-lysyl-[protein] + ADP + phosphate + H(+). Its pathway is lipid metabolism; malonyl-CoA biosynthesis; malonyl-CoA from acetyl-CoA: step 1/1. Its function is as follows. Multifunctional enzyme that catalyzes the carboxylation of acetyl-CoA, forming malonyl-CoA, which is used in the plastid for fatty acid synthesis and in the cytosol in various biosynthetic pathways including fatty acid elongation. The polypeptide is Acetyl-CoA carboxylase 2 (ACC2) (Arabidopsis thaliana (Mouse-ear cress)).